A 1052-amino-acid chain; its full sequence is Suppressor of RPS4-RLD 1 (1052 aa).

Ala2 carries the post-translational modification N-acetylalanine. 2 TPR repeats span residues 39-72 (ILDI…EPFA) and 74-106 (QAFI…ALQQ). A coiled-coil region spans residues 107-136 (TADVKQLLELEELLKDARREIDGILKSHAT). Residues 131-181 (LKSHATESPQETPAYHSEKSDEKSDKLDNHESGASSNGNSHESSSELGEQS) are disordered. The segment covering 146–161 (HSEKSDEKSDKLDNHE) has biased composition (basic and acidic residues). The span at 162–181 (SGASSNGNSHESSSELGEQS) shows a compositional bias: low complexity. TPR repeat units follow at residues 297-330 (VDFR…EPTY), 331-364 (PEAL…NPAA), 365-398 (SEAW…EPNS), 400-432 (DVLH…EKDN), 433-466 (KSAY…DSNY), 468-500 (EAWL…DNRV), 502-534 (KAYH…ENTI), 535-567 (ECLY…ELDA), and 569-591 (EKFV…ASKV). A disordered region spans residues 704–739 (STKGTTKNGKKNRRRERTNILSQNRGGAGCSSSSFS). Residues 966 to 986 (GTAVTGFVVLLGLLLAANMEF) traverse the membrane as a helical segment.

In terms of assembly, multimer. Interacts with EDS1. Interacts with SNC1 and RPS4. Interacts (via TPR domain) with SGT1 (via TPR domain). Interacts with the TCP transcription factors TCP8, TCP14, TCP15, TCP20, TCP22 and TCP23. Ubiquitous. Not detected in very young flowers and older siliques.

The protein resides in the nucleus. It localises to the cytoplasm. Its subcellular location is the perinuclear region. It is found in the membrane. The protein localises to the microsome. Negative regulator of effector-triggered immunity associated with the EDS1 resistance pathway. May localize its interactors to a microsomal membrane. May therefore negatively regulate RPS4 and SNC1 translocation to the nucleus. Contributes to the regulation of RPS2 and RPS4 protein levels and negatively regulates SNC1 stability. The protein is Suppressor of RPS4-RLD 1 of Arabidopsis thaliana (Mouse-ear cress).